The chain runs to 262 residues: Cytochrome c oxidase subunit 3 (262 aa).

The next 6 helical transmembrane spans lie at 39–59, 83–103, 120–140, 163–183, 201–221, and 240–260; these read YDIS…YQWW, GMIL…WAFF, MGII…ILLA, GLFF…YEYI, ATGF…VCLL, and AWYW…IYWW.

The protein belongs to the cytochrome c oxidase subunit 3 family. In terms of assembly, component of the cytochrome c oxidase (complex IV, CIV), a multisubunit enzyme composed of a catalytic core of 3 subunits and several supernumerary subunits. The complex exists as a monomer or a dimer and forms supercomplexes (SCs) in the inner mitochondrial membrane with ubiquinol-cytochrome c oxidoreductase (cytochrome b-c1 complex, complex III, CIII).

The protein resides in the mitochondrion inner membrane. The enzyme catalyses 4 Fe(II)-[cytochrome c] + O2 + 8 H(+)(in) = 4 Fe(III)-[cytochrome c] + 2 H2O + 4 H(+)(out). Functionally, component of the cytochrome c oxidase, the last enzyme in the mitochondrial electron transport chain which drives oxidative phosphorylation. The respiratory chain contains 3 multisubunit complexes succinate dehydrogenase (complex II, CII), ubiquinol-cytochrome c oxidoreductase (cytochrome b-c1 complex, complex III, CIII) and cytochrome c oxidase (complex IV, CIV), that cooperate to transfer electrons derived from NADH and succinate to molecular oxygen, creating an electrochemical gradient over the inner membrane that drives transmembrane transport and the ATP synthase. Cytochrome c oxidase is the component of the respiratory chain that catalyzes the reduction of oxygen to water. Electrons originating from reduced cytochrome c in the intermembrane space (IMS) are transferred via the dinuclear copper A center (CU(A)) of subunit 2 and heme A of subunit 1 to the active site in subunit 1, a binuclear center (BNC) formed by heme A3 and copper B (CU(B)). The BNC reduces molecular oxygen to 2 water molecules using 4 electrons from cytochrome c in the IMS and 4 protons from the mitochondrial matrix. This is Cytochrome c oxidase subunit 3 (mt:CoIII) from Drosophila yakuba (Fruit fly).